Reading from the N-terminus, the 489-residue chain is Glucose-6-phosphate 1-dehydrogenase (489 aa).

The NADP(+) site is built by Arg50 and Lys151. Residues His181, Lys185, Glu219, and Asp238 each coordinate substrate. His243 acts as the Proton acceptor in catalysis. The substrate site is built by Lys341 and Lys346.

It belongs to the glucose-6-phosphate dehydrogenase family. In terms of assembly, homodimer.

The catalysed reaction is D-glucose 6-phosphate + NADP(+) = 6-phospho-D-glucono-1,5-lactone + NADPH + H(+). It participates in carbohydrate degradation; pentose phosphate pathway; D-ribulose 5-phosphate from D-glucose 6-phosphate (oxidative stage): step 1/3. Functionally, catalyzes the oxidation of glucose 6-phosphate to 6-phosphogluconolactone. In Gluconobacter oxydans (strain 621H) (Gluconobacter suboxydans), this protein is Glucose-6-phosphate 1-dehydrogenase.